A 447-amino-acid chain; its full sequence is uncharacterized protein (447 aa).

The interval 39 to 76 (PQAAPYTRNNGMGECRRGHRQGHRAEVHDNRPADKVGQ) is disordered. The segment covering 61–72 (HRAEVHDNRPAD) has biased composition (basic and acidic residues).

The protein belongs to the 3-oxoacid CoA-transferase subunit A family.

This is an uncharacterized protein from Archaeoglobus fulgidus (strain ATCC 49558 / DSM 4304 / JCM 9628 / NBRC 100126 / VC-16).